Here is a 282-residue protein sequence, read N- to C-terminus: Putative dolichyldiphosphatase (282 aa).

The next 2 helical transmembrane spans lie at 26-46 and 93-113; these read LLCAWLALVPQALCVVYATLI and MPSSHAQFVSFWAVALGLFLL. The tract at residues 121–153 is disordered; that stretch reads QQQQQQQKQKQRERKKQVTNVKTTTTNGSGNGS. Residues 138–148 are compositionally biased toward low complexity; sequence VTNVKTTTTNG. The next 2 membrane-spanning stretches (helical) occupy residues 173-193 and 207-227; these read WSFAHRFVASLGALVLAGAVA and VLVGCGAGTLCAVAWFVVTHV.

Belongs to the dolichyldiphosphatase family.

The protein resides in the endoplasmic reticulum membrane. It carries out the reaction a di-trans,poly-cis-dolichyl diphosphate + H2O = a di-trans,poly-cis-dolichyl phosphate + phosphate + H(+). Its pathway is protein modification; protein glycosylation. In Neurospora crassa (strain ATCC 24698 / 74-OR23-1A / CBS 708.71 / DSM 1257 / FGSC 987), this protein is Putative dolichyldiphosphatase.